Here is a 940-residue protein sequence, read N- to C-terminus: Isoleucine--tRNA ligase (940 aa).

A 'HIGH' region motif is present at residues 58 to 68; that stretch reads PYANGDIHIGH. Glu564 contacts L-isoleucyl-5'-AMP. The 'KMSKS' region motif lies at 605 to 609; it reads KMSKS. Residue Lys608 coordinates ATP. 4 residues coordinate Zn(2+): Cys903, Cys906, Cys923, and Cys926.

It belongs to the class-I aminoacyl-tRNA synthetase family. IleS type 1 subfamily. As to quaternary structure, monomer. Zn(2+) serves as cofactor.

It localises to the cytoplasm. The enzyme catalyses tRNA(Ile) + L-isoleucine + ATP = L-isoleucyl-tRNA(Ile) + AMP + diphosphate. In terms of biological role, catalyzes the attachment of isoleucine to tRNA(Ile). As IleRS can inadvertently accommodate and process structurally similar amino acids such as valine, to avoid such errors it has two additional distinct tRNA(Ile)-dependent editing activities. One activity is designated as 'pretransfer' editing and involves the hydrolysis of activated Val-AMP. The other activity is designated 'posttransfer' editing and involves deacylation of mischarged Val-tRNA(Ile). The sequence is that of Isoleucine--tRNA ligase from Shewanella pealeana (strain ATCC 700345 / ANG-SQ1).